Reading from the N-terminus, the 255-residue chain is tRNA (guanine-N(1)-)-methyltransferase (255 aa).

S-adenosyl-L-methionine is bound by residues Gly114 and 134 to 139 (IGDYIL).

Belongs to the RNA methyltransferase TrmD family. Homodimer.

Its subcellular location is the cytoplasm. The catalysed reaction is guanosine(37) in tRNA + S-adenosyl-L-methionine = N(1)-methylguanosine(37) in tRNA + S-adenosyl-L-homocysteine + H(+). Specifically methylates guanosine-37 in various tRNAs. This chain is tRNA (guanine-N(1)-)-methyltransferase, found in Blochmanniella pennsylvanica (strain BPEN).